Here is a 73-residue protein sequence, read N- to C-terminus: Conotoxin Gla(3)-TxVI (73 aa).

A signal peptide spans 1-19; sequence MQKLIILLLVAAVLMSAQA. Residues 20-44 constitute a propeptide that is removed on maturation; it reads VLQEKRPKEKIKFLSKRKTDAEKQQ. Cystine bridges form between Cys48–Cys62, Cys55–Cys66, and Cys61–Cys71. At Pro49 the chain carries 4-hydroxyproline. Glu53 bears the 4-carboxyglutamate; partial mark. Pro54 carries the post-translational modification 4-hydroxyproline. Glu60 bears the 4-carboxyglutamate mark. Trp64 carries the post-translational modification 6'-bromotryptophan.

Belongs to the conotoxin O2 superfamily. In terms of tissue distribution, expressed by the venom duct.

It localises to the secreted. This Conus textile (Cloth-of-gold cone) protein is Conotoxin Gla(3)-TxVI.